The sequence spans 350 residues: Guanine nucleotide-binding protein G(t) subunit alpha-1 (350 aa).

Residues 1-21 (MGAGASAEEKHSRELEKKLKE) form a disordered region. Gly2 is lipidated: N-myristoyl glycine. The span at 7-21 (AEEKHSRELEKKLKE) shows a compositional bias: basic and acidic residues. The 323-residue stretch at 28 to 350 (RTVKLLLLGA…KENLKDCGLF (323 aa)) folds into the G-alpha domain. Residues 31–44 (KLLLLGAGESGKST) are G1 motif. 36 to 43 (GAGESGKS) is a binding site for GTP. Residue Ser43 participates in Mg(2+) binding. Tyr142 carries the phosphotyrosine modification. GTP is bound by residues Asp146, 171 to 177 (LRSRVKT), Gly199, 265 to 268 (NKKD), and Ala322. A G2 motif region spans residues 169–177 (DVLRSRVKT). Residue Thr177 participates in Mg(2+) binding. The tract at residues 192 to 201 (FRMFDVGGQR) is G3 motif. The interval 261–268 (VLFLNKKD) is G4 motif. The G5 motif stretch occupies residues 320–325 (TCATDT). Residues 340 to 350 (IKENLKDCGLF) form an interaction with RHO region.

In terms of assembly, heterotrimeric G proteins are composed of 3 subunits alpha, beta and gamma. The alpha chain contains the guanine nucleotide binding site. Interacts with RHO. Interacts with RGS9 and PDE6G. Interacts (when myristoylated) with UNC119; interaction is required for localization in sensory neurons. As to expression, rod.

Its subcellular location is the cell projection. It localises to the cilium. The protein localises to the photoreceptor outer segment. It is found in the membrane. The protein resides in the photoreceptor inner segment. Functionally, functions as a signal transducer for the rod photoreceptor RHO. Required for normal RHO-mediated light perception by the retina. Guanine nucleotide-binding proteins (G proteins) function as transducers downstream of G protein-coupled receptors (GPCRs), such as the photoreceptor RHO. The alpha chain contains the guanine nucleotide binding site and alternates between an active, GTP-bound state and an inactive, GDP-bound state. Activated RHO promotes GDP release and GTP binding. Signaling is mediated via downstream effector proteins, such as cGMP-phosphodiesterase. This chain is Guanine nucleotide-binding protein G(t) subunit alpha-1 (GNAT1), found in Bos taurus (Bovine).